A 1070-amino-acid polypeptide reads, in one-letter code: DNA-directed RNA polymerase subunit beta (1070 aa).

The protein belongs to the RNA polymerase beta chain family. In plastids the minimal PEP RNA polymerase catalytic core is composed of four subunits: alpha, beta, beta', and beta''. When a (nuclear-encoded) sigma factor is associated with the core the holoenzyme is formed, which can initiate transcription.

The protein localises to the plastid. The protein resides in the chloroplast. The enzyme catalyses RNA(n) + a ribonucleoside 5'-triphosphate = RNA(n+1) + diphosphate. In terms of biological role, DNA-dependent RNA polymerase catalyzes the transcription of DNA into RNA using the four ribonucleoside triphosphates as substrates. This Phaseolus vulgaris (Kidney bean) protein is DNA-directed RNA polymerase subunit beta.